Consider the following 453-residue polypeptide: UDP-N-acetylmuramoylalanine--D-glutamate ligase (453 aa).

115-121 (GTNGKTT) is an ATP binding site.

Belongs to the MurCDEF family.

Its subcellular location is the cytoplasm. It catalyses the reaction UDP-N-acetyl-alpha-D-muramoyl-L-alanine + D-glutamate + ATP = UDP-N-acetyl-alpha-D-muramoyl-L-alanyl-D-glutamate + ADP + phosphate + H(+). It functions in the pathway cell wall biogenesis; peptidoglycan biosynthesis. Functionally, cell wall formation. Catalyzes the addition of glutamate to the nucleotide precursor UDP-N-acetylmuramoyl-L-alanine (UMA). This is UDP-N-acetylmuramoylalanine--D-glutamate ligase from Geotalea uraniireducens (strain Rf4) (Geobacter uraniireducens).